The chain runs to 176 residues: NAD(P)H-quinone oxidoreductase subunit 6, chloroplastic (176 aa).

5 helical membrane passes run 10–30 (FLLVFLGSGLILGGLGVVLLT), 32–52 (PIYSAFSLGLVFVCISLFYIP), 61–81 (AQLLIYVGAINVLIIFAVMFM), 93–115 (WTVGDGVTSVVCTSIFASLITTI), and 152–172 (FFLPFELISIILLVALIGAIA).

It belongs to the complex I subunit 6 family. As to quaternary structure, NDH is composed of at least 16 different subunits, 5 of which are encoded in the nucleus.

It localises to the plastid. The protein localises to the chloroplast thylakoid membrane. It catalyses the reaction a plastoquinone + NADH + (n+1) H(+)(in) = a plastoquinol + NAD(+) + n H(+)(out). It carries out the reaction a plastoquinone + NADPH + (n+1) H(+)(in) = a plastoquinol + NADP(+) + n H(+)(out). In terms of biological role, NDH shuttles electrons from NAD(P)H:plastoquinone, via FMN and iron-sulfur (Fe-S) centers, to quinones in the photosynthetic chain and possibly in a chloroplast respiratory chain. The immediate electron acceptor for the enzyme in this species is believed to be plastoquinone. Couples the redox reaction to proton translocation, and thus conserves the redox energy in a proton gradient. This chain is NAD(P)H-quinone oxidoreductase subunit 6, chloroplastic (ndhG), found in Vitis vinifera (Grape).